An 828-amino-acid polypeptide reads, in one-letter code: Periplasmic nitrate reductase (828 aa).

A signal peptide (tat-type signal) is located at residues 1–31 (MKLSRRSFMKANAVAAAAAAAGLSVPGVARA). One can recognise a 4Fe-4S Mo/W bis-MGD-type domain in the interval 39–95 (IKWDKAPCRFCGTGCGVLVGTQQGRVVACQGDPDAPVNRGLNCIKGYFLPKIMYGKD). Residues cysteine 46, cysteine 49, cysteine 53, and cysteine 81 each coordinate [4Fe-4S] cluster. Mo-bis(molybdopterin guanine dinucleotide) is bound by residues lysine 83, glutamine 150, asparagine 175, cysteine 179, 212–219 (WGANMAEM), 243–247 (STYQH), 262–264 (QSD), methionine 372, glutamine 376, asparagine 482, 508–509 (SD), lysine 531, aspartate 558, and 718–727 (TGRVLEHWHT). Substrate is bound at residue phenylalanine 794. Mo-bis(molybdopterin guanine dinucleotide) contacts are provided by asparagine 802 and lysine 819.

This sequence belongs to the prokaryotic molybdopterin-containing oxidoreductase family. NasA/NapA/NarB subfamily. As to quaternary structure, component of the periplasmic nitrate reductase NapAB complex composed of NapA and NapB. [4Fe-4S] cluster is required as a cofactor. Requires Mo-bis(molybdopterin guanine dinucleotide) as cofactor. In terms of processing, predicted to be exported by the Tat system. The position of the signal peptide cleavage has not been experimentally proven.

Its subcellular location is the periplasm. It carries out the reaction 2 Fe(II)-[cytochrome] + nitrate + 2 H(+) = 2 Fe(III)-[cytochrome] + nitrite + H2O. In terms of biological role, catalytic subunit of the periplasmic nitrate reductase complex NapAB. Receives electrons from NapB and catalyzes the reduction of nitrate to nitrite. The sequence is that of Periplasmic nitrate reductase from Escherichia coli O157:H7 (strain EC4115 / EHEC).